A 581-amino-acid polypeptide reads, in one-letter code: AP2-like ethylene-responsive transcription factor AIL6 (581 aa).

Disordered stretches follow at residues 105–132 (VRYS…HHNQ) and 205–240 (NNTN…TDSE). Composition is skewed to low complexity over residues 108–122 (SDNS…SLTQ) and 218–232 (RGNN…NNNN). 2 DNA-binding regions (AP2/ERF) span residues 268–331 (IYRG…TNFP) and 367–425 (IYRG…TNFE).

It belongs to the AP2/ERF transcription factor family. AP2 subfamily. Expressed in roots, seedlings, hypocotyl, inflorescence, siliques, and pistils. Also detected at low levels in leaves.

The protein localises to the nucleus. Functionally, probably acts as a transcriptional activator. Binds to the GCC-box pathogenesis-related promoter element. May be involved in the regulation of gene expression by stress factors and by components of stress signal transduction pathways. This Arabidopsis thaliana (Mouse-ear cress) protein is AP2-like ethylene-responsive transcription factor AIL6.